The sequence spans 763 residues: Xaa-Pro dipeptidyl-peptidase (763 aa).

Catalysis depends on charge relay system residues Ser-348, Asp-468, and His-498.

This sequence belongs to the peptidase S15 family. As to quaternary structure, homodimer.

The protein resides in the cytoplasm. It carries out the reaction Hydrolyzes Xaa-Pro-|- bonds to release unblocked, N-terminal dipeptides from substrates including Ala-Pro-|-p-nitroanilide and (sequentially) Tyr-Pro-|-Phe-Pro-|-Gly-Pro-|-Ile.. Its function is as follows. Removes N-terminal dipeptides sequentially from polypeptides having unsubstituted N-termini provided that the penultimate residue is proline. The chain is Xaa-Pro dipeptidyl-peptidase (pepX) from Lactococcus lactis subsp. lactis (strain IL1403) (Streptococcus lactis).